The primary structure comprises 291 residues: Ribonuclease Z (291 aa).

His60, His62, Asp64, His65, His132, Asp200, and His256 together coordinate Zn(2+). Asp64 functions as the Proton acceptor in the catalytic mechanism.

This sequence belongs to the RNase Z family. In terms of assembly, homodimer. Requires Zn(2+) as cofactor.

It carries out the reaction Endonucleolytic cleavage of RNA, removing extra 3' nucleotides from tRNA precursor, generating 3' termini of tRNAs. A 3'-hydroxy group is left at the tRNA terminus and a 5'-phosphoryl group is left at the trailer molecule.. Functionally, zinc phosphodiesterase, which displays some tRNA 3'-processing endonuclease activity. Probably involved in tRNA maturation, by removing a 3'-trailer from precursor tRNA. The chain is Ribonuclease Z from Metallosphaera sedula (strain ATCC 51363 / DSM 5348 / JCM 9185 / NBRC 15509 / TH2).